We begin with the raw amino-acid sequence, 197 residues long: Imidazoleglycerol-phosphate dehydratase (197 aa).

The protein belongs to the imidazoleglycerol-phosphate dehydratase family.

Its subcellular location is the cytoplasm. It carries out the reaction D-erythro-1-(imidazol-4-yl)glycerol 3-phosphate = 3-(imidazol-4-yl)-2-oxopropyl phosphate + H2O. It participates in amino-acid biosynthesis; L-histidine biosynthesis; L-histidine from 5-phospho-alpha-D-ribose 1-diphosphate: step 6/9. The protein is Imidazoleglycerol-phosphate dehydratase of Streptomyces avermitilis (strain ATCC 31267 / DSM 46492 / JCM 5070 / NBRC 14893 / NCIMB 12804 / NRRL 8165 / MA-4680).